A 443-amino-acid chain; its full sequence is Phosphatidate cytidylyltransferase 2 (443 aa).

The segment covering 1–38 (MTELRQRAVREDAPPEDKESESEAKLDGETASDSESRA) has biased composition (basic and acidic residues). Residues 1-51 (MTELRQRAVREDAPPEDKESESEAKLDGETASDSESRAETAPPPTSIDDTP) form a disordered region. S20 is subject to Phosphoserine. Residue T30 is modified to Phosphothreonine. Phosphoserine is present on residues S32, S34, and S36. Position 50 is a phosphothreonine (T50). The next 6 helical transmembrane spans lie at 78–98 (MIAF…MIVM), 129–149 (WYFL…DYFF), 165–185 (HRFI…LSLV), 212–232 (LVIH…SCVI), 261–281 (GFIG…YVMS), and 338–358 (SALS…ASGF).

It belongs to the CDS family. As to quaternary structure, homodimer.

The protein localises to the endoplasmic reticulum membrane. The catalysed reaction is a 1,2-diacyl-sn-glycero-3-phosphate + CTP + H(+) = a CDP-1,2-diacyl-sn-glycerol + diphosphate. It carries out the reaction 1-octadecanoyl-2-(5Z,8Z,11Z,14Z-eicosatetraenoyl)-sn-glycero-3-phosphate + CTP + H(+) = 1-octadecanoyl-2-(5Z,8Z,11Z,14Z-eicosatetraenoyl)-sn-glycero-3-cytidine-5'-diphosphate + diphosphate. The enzyme catalyses 1-octadecanoyl-2-(9Z,12Z-octadecadienoyl)-sn-glycero-3-phosphate + CTP + H(+) = 1-octadecanoyl-2-(9Z,12Z-octadecadienoyl)-sn-glycero-3-cytidine-5'-diphosphate + diphosphate. It catalyses the reaction 1-hexadecanoyl-2-(5Z,8Z,11Z,14Z-eicosatetraenoyl)-sn-glycero-3-phosphate + CTP + H(+) = 1-hexadecanoyl-2-(5Z,8Z,11Z,14Z-eicosatetraenoyl)-sn-glycero-3-cytidine-5'-diphosphate + diphosphate. The catalysed reaction is 1,2-di-(5Z,8Z,11Z,14Z)-eicosatetraenoyl-sn-glycero-3-phosphate + CTP + H(+) = 1,2-di-(5Z,8Z,11Z,14Z-eicosatetraenoyl)-sn-glycero-3-cytidine-5'-diphosphate + diphosphate. It carries out the reaction 1-octadecanoyl-2-(9Z-octadecenoyl)-sn-glycero-3-phosphate + CTP + H(+) = 1-octadecanoyl-2-(9Z-octadecenoyl)-sn-glycero-3-cytidine-5'-diphosphate + diphosphate. The enzyme catalyses 1-octadecanoyl-2-(4Z,7Z,10Z,13Z,16Z,19Z-docosahexaenoyl)-sn-glycero-3-phosphate + CTP + H(+) = 1-octadecanoyl-2-(4Z,7Z,10Z,13Z,16Z,19Z-docosahexaenoyl)-sn-glycero-3-cytidine-5'-diphosphate + diphosphate. It catalyses the reaction 1,2-di-(9Z,12Z-octadecadienoyl)-sn-glycero-3-phosphate + CTP + H(+) = 1,2-di-(9Z,12Z-octadecadienoyl)-sn-glycero-3-cytidine-5'-diphosphate + diphosphate. The catalysed reaction is 1,2-di-(9Z-octadecenoyl)-sn-glycero-3-phosphate + CTP + H(+) = 1,2-di-(9Z-octadecenoyl)-sn-glycero-3-cytidine-5'-diphosphate + diphosphate. It participates in phospholipid metabolism; CDP-diacylglycerol biosynthesis; CDP-diacylglycerol from sn-glycerol 3-phosphate: step 3/3. Its function is as follows. Catalyzes the conversion of phosphatidic acid (PA) to CDP-diacylglycerol (CDP-DAG), an essential intermediate in the synthesis of phosphatidylglycerol, cardiolipin and phosphatidylinositol. Exhibits specificity for the nature of the acyl chains at the sn-1 and sn-2 positions in the substrate, PA and the preferred acyl chain composition is 1-stearoyl-2-arachidonoyl-sn-phosphatidic acid. Plays an important role in regulating the growth and maturation of lipid droplets which are storage organelles at the center of lipid and energy homeostasis. In Rattus norvegicus (Rat), this protein is Phosphatidate cytidylyltransferase 2.